A 267-amino-acid chain; its full sequence is Large ribosomal subunit protein bL9m (267 aa).

The transit peptide at Met1–Gly52 directs the protein to the mitochondrion.

This sequence belongs to the bacterial ribosomal protein bL9 family. As to quaternary structure, component of the mitochondrial ribosome large subunit (39S) which comprises a 16S rRNA and about 50 distinct proteins.

The protein localises to the mitochondrion. The sequence is that of Large ribosomal subunit protein bL9m (MRPL9) from Papio anubis (Olive baboon).